The following is a 236-amino-acid chain: Small ribosomal subunit protein uS3c (236 aa).

The KH type-2 domain maps to 47 to 127 (VRKYVRSSSR…KLNMTLSQVA (81 aa)).

This sequence belongs to the universal ribosomal protein uS3 family. As to quaternary structure, part of the 30S ribosomal subunit.

The protein resides in the plastid. It is found in the chloroplast. The chain is Small ribosomal subunit protein uS3c (rps3) from Zygnema circumcarinatum (Green alga).